We begin with the raw amino-acid sequence, 476 residues long: Ubiquinone biosynthesis monooxygenase COQ6, mitochondrial (476 aa).

The transit peptide at 1-42 directs the protein to the mitochondrion; sequence MAARIGPMAGLLCVRWWSTAQLAARGGPLVACRRWTSSSTDS.

The protein belongs to the UbiH/COQ6 family. In terms of assembly, component of a multi-subunit COQ enzyme complex, composed of at least COQ3, COQ4, COQ5, COQ6, COQ7 and COQ9. Interacts with COQ8B and COQ7. FAD serves as cofactor. As to expression, in the kidney, expressed almost exclusively in glomerular podocytes. In the inner ear, expressed in the spiral ganglion, as well as in stria vascularis and spiral ligament cells.

The protein resides in the mitochondrion inner membrane. It localises to the golgi apparatus. The protein localises to the cell projection. The enzyme catalyses 4-hydroxy-3-(all-trans-decaprenyl)benzoate + 2 reduced [2Fe-2S]-[ferredoxin] + O2 + 2 H(+) = 3,4-dihydroxy-5-(all-trans-decaprenyl)benzoate + 2 oxidized [2Fe-2S]-[ferredoxin] + H2O. The catalysed reaction is 2-methoxy-6-(all-trans-decaprenyl)phenol + 2 reduced [2Fe-2S]-[ferredoxin] + O2 + 2 H(+) = 2-methoxy-6-(all-trans-decaprenyl)benzene-1,4-diol + 2 oxidized [2Fe-2S]-[ferredoxin] + H2O. The protein operates within cofactor biosynthesis; ubiquinone biosynthesis. In terms of biological role, FAD-dependent monooxygenase required for two non-consecutive steps during ubiquinone biosynthesis. Required for the C5-ring hydroxylation during ubiquinone biosynthesis by catalyzing the hydroxylation of 4-hydroxy-3-(all-trans-decaprenyl)benzoic acid to 3,4-dihydroxy-5-(all-trans-decaprenyl)benzoic acid. Also acts downstream of COQ4, for the C1-hydroxylation during ubiquinone biosynthesis by catalyzing the hydroxylation of 2-methoxy-6-(all-trans-decaprenyl)phenol to 2-methoxy-6-(all-trans-decaprenyl)benzene-1,4-diol. The electrons required for the hydroxylation reaction are funneled indirectly to COQ6 from NADPH via a ferredoxin/ferredoxin reductase system composed of FDX2 and FDXR. The sequence is that of Ubiquinone biosynthesis monooxygenase COQ6, mitochondrial from Rattus norvegicus (Rat).